We begin with the raw amino-acid sequence, 203 residues long: ATP-dependent Clp protease proteolytic subunit (203 aa).

Ser-107 functions as the Nucleophile in the catalytic mechanism. His-132 is a catalytic residue.

It belongs to the peptidase S14 family. Fourteen ClpP subunits assemble into 2 heptameric rings which stack back to back to give a disk-like structure with a central cavity, resembling the structure of eukaryotic proteasomes.

It is found in the cytoplasm. The catalysed reaction is Hydrolysis of proteins to small peptides in the presence of ATP and magnesium. alpha-casein is the usual test substrate. In the absence of ATP, only oligopeptides shorter than five residues are hydrolyzed (such as succinyl-Leu-Tyr-|-NHMec, and Leu-Tyr-Leu-|-Tyr-Trp, in which cleavage of the -Tyr-|-Leu- and -Tyr-|-Trp bonds also occurs).. Cleaves peptides in various proteins in a process that requires ATP hydrolysis. Has a chymotrypsin-like activity. Plays a major role in the degradation of misfolded proteins. In Shewanella woodyi (strain ATCC 51908 / MS32), this protein is ATP-dependent Clp protease proteolytic subunit.